A 194-amino-acid polypeptide reads, in one-letter code: Probable RNA 2'-phosphotransferase (194 aa).

This sequence belongs to the KptA/TPT1 family.

Removes the 2'-phosphate from RNA via an intermediate in which the phosphate is ADP-ribosylated by NAD followed by a presumed transesterification to release the RNA and generate ADP-ribose 1''-2''-cyclic phosphate (APPR&gt;P). May function as an ADP-ribosylase. This is Probable RNA 2'-phosphotransferase from Burkholderia lata (strain ATCC 17760 / DSM 23089 / LMG 22485 / NCIMB 9086 / R18194 / 383).